A 99-amino-acid chain; its full sequence is Putative septation protein SpoVG (99 aa).

The protein belongs to the SpoVG family.

Functionally, could be involved in septation. The chain is Putative septation protein SpoVG from Onion yellows phytoplasma (strain OY-M).